The sequence spans 206 residues: Ras-related protein Rab-18 (206 aa).

N-acetylmethionine is present on methionine 1. Residues serine 17, glycine 20, lysine 21, serine 22, serine 23, aspartate 34, proline 35, threonine 40, glycine 66, lysine 123, and aspartate 125 each contribute to the GTP site. Serine 22 serves as a coordination point for Mg(2+). Short sequence motifs (switch) lie at residues 31-45 (DTFD…GVDF) and 63-80 (DTAG…YYRG). Threonine 40 contacts Mg(2+). Serine 144 carries the phosphoserine modification. GTP is bound at residue alanine 152. The S-palmitoyl cysteine moiety is linked to residue cysteine 199. Cysteine 203 carries the cysteine methyl ester modification. Residue cysteine 203 is the site of S-geranylgeranyl cysteine attachment. Residues 204 to 206 (SVL) constitute a propeptide, removed in mature form.

The protein belongs to the small GTPase superfamily. Rab family. Interacts (in GTP-bound form) with ZFYVE1. Interacts with ZW10 and this interaction is enhanced in the presence of ZFYVE1. Interacts with BSCL2. Mg(2+) serves as cofactor.

Its subcellular location is the endoplasmic reticulum membrane. The protein resides in the golgi apparatus. It localises to the cis-Golgi network membrane. It is found in the lipid droplet. The protein localises to the apical cell membrane. The catalysed reaction is GTP + H2O = GDP + phosphate + H(+). Its activity is regulated as follows. Regulated by guanine nucleotide exchange factors (GEFs) which promote the exchange of bound GDP for free GTP. Regulated by GTPase activating proteins (GAPs) which increase the GTP hydrolysis activity at the ER membrane. Inhibited by GDP dissociation inhibitors (GDIs) which prevent Rab-GDP dissociation. Functionally, the small GTPases Rab are key regulators of intracellular membrane trafficking, from the formation of transport vesicles to their fusion with membranes. Rabs cycle between an inactive GDP-bound form and an active GTP-bound form that is able to recruit to membranes different sets of downstream effectors directly responsible for vesicle formation, movement, tethering and fusion. RAB18 is required for the localization of ZFYVE1 to lipid droplets and for its function in mediating the formation of endoplasmic reticulum-lipid droplets (ER-LD) contacts. Also required for maintaining endoplasmic reticulum structure. Plays a role in apical endocytosis/recycling. Plays a key role in eye and brain development and neurodegeneration. This is Ras-related protein Rab-18 from Rattus norvegicus (Rat).